Here is a 171-residue protein sequence, read N- to C-terminus: Large ribosomal subunit protein uL10 (171 aa).

Belongs to the universal ribosomal protein uL10 family. Part of the ribosomal stalk of the 50S ribosomal subunit. The N-terminus interacts with L11 and the large rRNA to form the base of the stalk. The C-terminus forms an elongated spine to which L12 dimers bind in a sequential fashion forming a multimeric L10(L12)X complex.

Forms part of the ribosomal stalk, playing a central role in the interaction of the ribosome with GTP-bound translation factors. This Paracoccus denitrificans (strain Pd 1222) protein is Large ribosomal subunit protein uL10.